Consider the following 73-residue polypeptide: Copper chaperone ATX1 (73 aa).

The 65-residue stretch at 4–68 (IKHYQFNVVM…KIKKTGKEVR (65 aa)) folds into the HMA domain. Positions 15 and 18 each coordinate Cu(+).

The protein belongs to the ATX1 family. In terms of assembly, homodimer. Interacts with CCC2 via the copper anion.

The protein localises to the cytoplasm. Its activity is regulated as follows. Tetrathiomolybdate directly and reversibly down-regulates copper delivery to secreted metalloenzymes. Copper homeostasis factor that specifically transports copper to the secretory pathway for incorporation into copper enzymes destined for the cell surface or extracellular milieu. Shuttles copper to the transport ATPase CCC2 on a post-Golgi vesicle for eventual targeting to the cell-surface high-affinity iron uptake protein FET3. Protects against oxygen toxicity. This is Copper chaperone ATX1 from Saccharomyces cerevisiae (strain ATCC 204508 / S288c) (Baker's yeast).